A 194-amino-acid chain; its full sequence is Imidazoleglycerol-phosphate dehydratase (194 aa).

It belongs to the imidazoleglycerol-phosphate dehydratase family.

The protein localises to the cytoplasm. It catalyses the reaction D-erythro-1-(imidazol-4-yl)glycerol 3-phosphate = 3-(imidazol-4-yl)-2-oxopropyl phosphate + H2O. It functions in the pathway amino-acid biosynthesis; L-histidine biosynthesis; L-histidine from 5-phospho-alpha-D-ribose 1-diphosphate: step 6/9. In Bacillus cereus (strain B4264), this protein is Imidazoleglycerol-phosphate dehydratase.